A 221-amino-acid chain; its full sequence is PKHD-type hydroxylase P9215_13741 (221 aa).

Residues 80-174 (RIHGTMFTKT…RFVVVGWIES (95 aa)) form the Fe2OG dioxygenase domain. Positions 98, 100, and 155 each coordinate Fe cation. A 2-oxoglutarate-binding site is contributed by Arg-165.

Fe(2+) serves as cofactor. L-ascorbate is required as a cofactor.

The polypeptide is PKHD-type hydroxylase P9215_13741 (Prochlorococcus marinus (strain MIT 9215)).